The sequence spans 218 residues: Transaldolase (218 aa).

Lys-83 functions as the Schiff-base intermediate with substrate in the catalytic mechanism.

Belongs to the transaldolase family. Type 3B subfamily.

The protein localises to the cytoplasm. It carries out the reaction D-sedoheptulose 7-phosphate + D-glyceraldehyde 3-phosphate = D-erythrose 4-phosphate + beta-D-fructose 6-phosphate. It functions in the pathway carbohydrate degradation; pentose phosphate pathway; D-glyceraldehyde 3-phosphate and beta-D-fructose 6-phosphate from D-ribose 5-phosphate and D-xylulose 5-phosphate (non-oxidative stage): step 2/3. Its function is as follows. Transaldolase is important for the balance of metabolites in the pentose-phosphate pathway. Does not show fructose-6-P aldolase activity. The sequence is that of Transaldolase (tal) from Thermotoga maritima (strain ATCC 43589 / DSM 3109 / JCM 10099 / NBRC 100826 / MSB8).